Reading from the N-terminus, the 244-residue chain is NAD(P)H-quinone oxidoreductase subunit K (244 aa).

C60, C61, C125, and C156 together coordinate [4Fe-4S] cluster.

This sequence belongs to the complex I 20 kDa subunit family. As to quaternary structure, NDH-1 can be composed of about 15 different subunits; different subcomplexes with different compositions have been identified which probably have different functions. [4Fe-4S] cluster is required as a cofactor.

The protein resides in the cellular thylakoid membrane. It catalyses the reaction a plastoquinone + NADH + (n+1) H(+)(in) = a plastoquinol + NAD(+) + n H(+)(out). The catalysed reaction is a plastoquinone + NADPH + (n+1) H(+)(in) = a plastoquinol + NADP(+) + n H(+)(out). Its function is as follows. NDH-1 shuttles electrons from an unknown electron donor, via FMN and iron-sulfur (Fe-S) centers, to quinones in the respiratory and/or the photosynthetic chain. The immediate electron acceptor for the enzyme in this species is believed to be plastoquinone. Couples the redox reaction to proton translocation, and thus conserves the redox energy in a proton gradient. Cyanobacterial NDH-1 also plays a role in inorganic carbon-concentration. The sequence is that of NAD(P)H-quinone oxidoreductase subunit K from Synechococcus sp. (strain CC9902).